The chain runs to 757 residues: Probable phospholipase C20G8.02, mitochondrial (757 aa).

A mitochondrion-targeting transit peptide spans 1–13 (MILYIVLPFYVRT). Residues 289–330 (ESNSKPSTPVPTEELTSTTLLNDSSDPSDNFTPSNTESTIDL) form a disordered region. Residues 302–329 (ELTSTTLLNDSSDPSDNFTPSNTESTID) are compositionally biased toward polar residues. Residue Ser524 is part of the active site. The region spanning 547–757 (LDFPVANFFA…LAHFILTQLL (211 aa)) is the DDHD domain.

This sequence belongs to the PA-PLA1 family.

The protein localises to the mitochondrion. Probable phospholipase that hydrolyzes phosphatidic acid. This is Probable phospholipase C20G8.02, mitochondrial from Schizosaccharomyces pombe (strain 972 / ATCC 24843) (Fission yeast).